The primary structure comprises 125 residues: MKLFVHNFMSSRFLKNVTVGYPLNLVVKQFVEKDIEFDRDNTIVMLDRIQYEALIVAAAAVNQSDRIPREKPEKWDELTDEQLRVFHHLLMNIDVIDGELICPETKTVFPIRDGIPNMLKVDAEK.

The TRM112 domain occupies 2-121 (KLFVHNFMSS…RDGIPNMLKV (120 aa)).

Belongs to the TRM112 family.

It localises to the nucleus. It is found in the nucleoplasm. The protein resides in the cytoplasm. The protein localises to the perinuclear region. Its function is as follows. Acts as an activator of both RNA and protein methyltransferases. The polypeptide is Multifunctional methyltransferase subunit TRM112-like protein (Caenorhabditis elegans).